Consider the following 1433-residue polypeptide: Probable ATP-dependent RNA helicase spindle-E (1433 aa).

Residues 126 to 294 (INAINENPVV…FANERSAPPV (169 aa)) form the Helicase ATP-binding domain. Residue 139-146 (GETGCGKT) participates in ATP binding. The DEAH box motif lies at 240–243 (DEVH). Residues 355 to 526 (TGKSYNQSLR…NCVLKAKELK (172 aa)) form the Helicase C-terminal domain. A Tudor domain is found at 935 to 998 (AGAITKGLML…RLMSQDLLRH (64 aa)).

The protein belongs to the DEAD box helicase family. DEAH subfamily.

The protein localises to the cytoplasm. It carries out the reaction ATP + H2O = ADP + phosphate + H(+). Probable ATP-binding RNA helicase which plays a central role during spermatogenesis and oogenesis by repressing transposable elements and preventing their mobilization, which is essential for the germline integrity. Acts via the piRNA metabolic process, which mediates the repression of transposable elements during meiosis by forming complexes composed of piRNAs and Piwi and govern the methylation and subsequent repression of transposons. Involved in the repression of LTR retrotransposon copia. Also involved in telomere regulation by repressing specialized telomeric retroelements HeT-A, TAHRE, and TART; Drosophila telomeres being maintained by transposition of specialized telomeric retroelements. Involved in telomeric trans-silencing, a repression mechanism by which a transposon or a transgene inserted in subtelomeric heterochromatin has the capacity to repress in trans in the female germline, a homologous transposon, or transgene located in euchromatin. Involved in the repression of testis-expressed Stellate genes by the homologous Su(Ste) repeats. Required for anteroposterior and dorsoventral axis formation during oogenesis. This Drosophila pseudoobscura pseudoobscura (Fruit fly) protein is Probable ATP-dependent RNA helicase spindle-E (spn-E).